The chain runs to 600 residues: UvrABC system protein C (600 aa).

In terms of domain architecture, GIY-YIG spans 15–92 (EKAGCYLMKD…IKKYQPYYNV (78 aa)). The UVR domain maps to 197–232 (QEVKKDLTNKMLQASADLEFERAGELRDQLKYIEET).

The protein belongs to the UvrC family. In terms of assembly, interacts with UvrB in an incision complex.

The protein resides in the cytoplasm. Functionally, the UvrABC repair system catalyzes the recognition and processing of DNA lesions. UvrC both incises the 5' and 3' sides of the lesion. The N-terminal half is responsible for the 3' incision and the C-terminal half is responsible for the 5' incision. The polypeptide is UvrABC system protein C (Lactobacillus delbrueckii subsp. bulgaricus (strain ATCC BAA-365 / Lb-18)).